The following is a 281-amino-acid chain: Bis(5'-nucleosyl)-tetraphosphatase, symmetrical (281 aa).

It belongs to the Ap4A hydrolase family.

The enzyme catalyses P(1),P(4)-bis(5'-adenosyl) tetraphosphate + H2O = 2 ADP + 2 H(+). Hydrolyzes diadenosine 5',5'''-P1,P4-tetraphosphate to yield ADP. The polypeptide is Bis(5'-nucleosyl)-tetraphosphatase, symmetrical (Delftia acidovorans (strain DSM 14801 / SPH-1)).